Reading from the N-terminus, the 284-residue chain is NAD kinase (284 aa).

D67 (proton acceptor) is an active-site residue. NAD(+) contacts are provided by residues 67 to 68, 141 to 142, R152, K169, D171, 182 to 187, and Q241; these read DG, ND, and TGYSLS.

Belongs to the NAD kinase family. The cofactor is a divalent metal cation.

The protein resides in the cytoplasm. The catalysed reaction is NAD(+) + ATP = ADP + NADP(+) + H(+). Its function is as follows. Involved in the regulation of the intracellular balance of NAD and NADP, and is a key enzyme in the biosynthesis of NADP. Catalyzes specifically the phosphorylation on 2'-hydroxyl of the adenosine moiety of NAD to yield NADP. The chain is NAD kinase from Geotalea daltonii (strain DSM 22248 / JCM 15807 / FRC-32) (Geobacter daltonii).